The following is a 75-amino-acid chain: Mu-conotoxin GIIIA (75 aa).

The first 20 residues, Met-1 to Ala-20, serve as a signal peptide directing secretion. The propeptide occupies Leu-21–Arg-51. 3 disulfide bridges follow: Cys-54/Cys-66, Cys-55/Cys-71, and Cys-61/Cys-72. 4-hydroxyproline; partial is present on residues Pro-57 and Pro-58. At Pro-68 the chain carries 4-hydroxyproline. An Alanine amide modification is found at Ala-73.

It belongs to the conotoxin M superfamily. Post-translationally, hydroxylated; hydroxylations improve the ability to block Nav1.4/SCN4A sodium channels but does not affect folding. As to expression, expressed by the venom duct.

It localises to the secreted. Functionally, mu-conotoxins block voltage-gated sodium channels (Nav). This toxin potently blocks rat Nav1.4/SCN4A (IC(50)= 19-110 nM). It also moderately blocks rNav1.1/SCN1A (Kd=260 nM), rNav1.2/SCN2A (IC(50)=2.7-17.8 uM), and mNav1.6/SCN8A (IC(50)=680 nM). The inhibition is reversible. In vivo, induces paralysis to an isolated skeletal muscle preparation from frog (cutaneous pectoralis) within a few minutes. This is Mu-conotoxin GIIIA from Conus geographus (Geography cone).